The following is a 277-amino-acid chain: Large ribosomal subunit protein uL2 (277 aa).

Positions 219–277 (TVRGSVMNPNDHPHGGGEGRAPIGRKSPMSPWGKPTLGFKTRKKKNKSDKFIVRRRKNK) are disordered. Positions 258–277 (KTRKKKNKSDKFIVRRRKNK) are enriched in basic residues.

This sequence belongs to the universal ribosomal protein uL2 family. In terms of assembly, part of the 50S ribosomal subunit. Forms a bridge to the 30S subunit in the 70S ribosome.

In terms of biological role, one of the primary rRNA binding proteins. Required for association of the 30S and 50S subunits to form the 70S ribosome, for tRNA binding and peptide bond formation. It has been suggested to have peptidyltransferase activity; this is somewhat controversial. Makes several contacts with the 16S rRNA in the 70S ribosome. In Bacillus subtilis (strain 168), this protein is Large ribosomal subunit protein uL2.